Reading from the N-terminus, the 257-residue chain is Small ribosomal subunit protein uS2 (257 aa).

It belongs to the universal ribosomal protein uS2 family.

The protein is Small ribosomal subunit protein uS2 of Trichlorobacter lovleyi (strain ATCC BAA-1151 / DSM 17278 / SZ) (Geobacter lovleyi).